A 481-amino-acid polypeptide reads, in one-letter code: UDP-N-acetylmuramoyl-L-alanyl-D-glutamate--L-lysine ligase (481 aa).

Residue Ser42 participates in UDP-N-acetyl-alpha-D-muramoyl-L-alanyl-D-glutamate binding. 118–124 lines the ATP pocket; that stretch reads GTKGKTT. Residues Asn158, 160–161, Ser187, and Arg195 each bind UDP-N-acetyl-alpha-D-muramoyl-L-alanyl-D-glutamate; that span reads TT. Lys229 is subject to N6-carboxylysine. An L-lysine recognition motif motif is present at residues 404–407; that stretch reads DDPN.

It belongs to the MurCDEF family. MurE subfamily. In terms of processing, carboxylation is probably crucial for Mg(2+) binding and, consequently, for the gamma-phosphate positioning of ATP.

Its subcellular location is the cytoplasm. The enzyme catalyses UDP-N-acetyl-alpha-D-muramoyl-L-alanyl-D-glutamate + L-lysine + ATP = UDP-N-acetyl-alpha-D-muramoyl-L-alanyl-gamma-D-glutamyl-L-lysine + ADP + phosphate + H(+). It participates in cell wall biogenesis; peptidoglycan biosynthesis. In terms of biological role, catalyzes the addition of L-lysine to the nucleotide precursor UDP-N-acetylmuramoyl-L-alanyl-D-glutamate (UMAG) in the biosynthesis of bacterial cell-wall peptidoglycan. The polypeptide is UDP-N-acetylmuramoyl-L-alanyl-D-glutamate--L-lysine ligase (Streptococcus thermophilus (strain ATCC BAA-491 / LMD-9)).